Consider the following 413-residue polypeptide: Multifunctional CCA protein (413 aa).

ATP contacts are provided by G8 and R11. CTP contacts are provided by G8 and R11. The Mg(2+) site is built by D21 and D23. Positions 91, 137, and 140 each coordinate ATP. Residues R91, R137, and R140 each coordinate CTP. An HD domain is found at 228 to 329; the sequence is TGIHTLMTLS…VKLFDNIDAW (102 aa).

Belongs to the tRNA nucleotidyltransferase/poly(A) polymerase family. Bacterial CCA-adding enzyme type 1 subfamily. In terms of assembly, monomer. Can also form homodimers and oligomers. It depends on Mg(2+) as a cofactor. The cofactor is Ni(2+).

The enzyme catalyses a tRNA precursor + 2 CTP + ATP = a tRNA with a 3' CCA end + 3 diphosphate. The catalysed reaction is a tRNA with a 3' CCA end + 2 CTP + ATP = a tRNA with a 3' CCACCA end + 3 diphosphate. In terms of biological role, catalyzes the addition and repair of the essential 3'-terminal CCA sequence in tRNAs without using a nucleic acid template. Adds these three nucleotides in the order of C, C, and A to the tRNA nucleotide-73, using CTP and ATP as substrates and producing inorganic pyrophosphate. tRNA 3'-terminal CCA addition is required both for tRNA processing and repair. Also involved in tRNA surveillance by mediating tandem CCA addition to generate a CCACCA at the 3' terminus of unstable tRNAs. While stable tRNAs receive only 3'-terminal CCA, unstable tRNAs are marked with CCACCA and rapidly degraded. This chain is Multifunctional CCA protein, found in Enterobacter sp. (strain 638).